A 143-amino-acid chain; its full sequence is Phosphoribosyl-AMP cyclohydrolase (143 aa).

Residue Asp86 coordinates Mg(2+). Cys87 serves as a coordination point for Zn(2+). Residues Asp88 and Asp90 each coordinate Mg(2+). Residues Cys103 and Cys110 each contribute to the Zn(2+) site.

The protein belongs to the PRA-CH family. Homodimer. The cofactor is Mg(2+). It depends on Zn(2+) as a cofactor.

The protein localises to the cytoplasm. The enzyme catalyses 1-(5-phospho-beta-D-ribosyl)-5'-AMP + H2O = 1-(5-phospho-beta-D-ribosyl)-5-[(5-phospho-beta-D-ribosylamino)methylideneamino]imidazole-4-carboxamide. It functions in the pathway amino-acid biosynthesis; L-histidine biosynthesis; L-histidine from 5-phospho-alpha-D-ribose 1-diphosphate: step 3/9. Catalyzes the hydrolysis of the adenine ring of phosphoribosyl-AMP. The protein is Phosphoribosyl-AMP cyclohydrolase of Rhodospirillum rubrum (strain ATCC 11170 / ATH 1.1.1 / DSM 467 / LMG 4362 / NCIMB 8255 / S1).